The chain runs to 333 residues: Phosphoribosylformylglycinamidine cyclo-ligase (333 aa).

This sequence belongs to the AIR synthase family.

The protein resides in the cytoplasm. The catalysed reaction is 2-formamido-N(1)-(5-O-phospho-beta-D-ribosyl)acetamidine + ATP = 5-amino-1-(5-phospho-beta-D-ribosyl)imidazole + ADP + phosphate + H(+). It functions in the pathway purine metabolism; IMP biosynthesis via de novo pathway; 5-amino-1-(5-phospho-D-ribosyl)imidazole from N(2)-formyl-N(1)-(5-phospho-D-ribosyl)glycinamide: step 2/2. This Clostridium perfringens (strain ATCC 13124 / DSM 756 / JCM 1290 / NCIMB 6125 / NCTC 8237 / Type A) protein is Phosphoribosylformylglycinamidine cyclo-ligase.